Consider the following 395-residue polypeptide: Chalcone synthase 1 (395 aa).

Val2 bears the N-acetylvaline mark. Cys169 is an active-site residue.

It belongs to the thiolase-like superfamily. Chalcone/stilbene synthases family.

It carries out the reaction (E)-4-coumaroyl-CoA + 3 malonyl-CoA + 3 H(+) = 2',4,4',6'-tetrahydroxychalcone + 3 CO2 + 4 CoA. It functions in the pathway secondary metabolite biosynthesis; flavonoid biosynthesis. The primary product of this enzyme is 4,2',4',6'-tetrahydroxychalcone (also termed naringenin-chalcone or chalcone) which can under specific conditions spontaneously isomerize into naringenin. In Sinapis alba (White mustard), this protein is Chalcone synthase 1 (CHS1).